The chain runs to 166 residues: Arginine repressor (166 aa).

The protein belongs to the ArgR family.

It is found in the cytoplasm. It functions in the pathway amino-acid biosynthesis; L-arginine biosynthesis [regulation]. Functionally, regulates arginine biosynthesis genes. This is Arginine repressor from Mycobacterium ulcerans (strain Agy99).